A 407-amino-acid chain; its full sequence is 45 kDa calcium-binding protein (407 aa).

Residues 1–35 (MVWSWVAMASRWGPLVGLAPRCLWLLGAVLLMDAS) form the signal peptide. Asn-40 is a glycosylation site (N-linked (GlcNAc...) asparagine). 2 EF-hand domains span residues 98 to 133 (RSRR…KTAE) and 137 to 172 (EAME…SKGH). Residue Ser-99 is modified to Phosphoserine. Asp-111, Asn-113, Asp-115, Lys-117, Glu-122, Asp-150, Asp-152, Asp-154, His-156, and Glu-161 together coordinate Ca(2+). Residues Thr-193 and Thr-217 each carry the phosphothreonine modification. Residues 249–259 (GSSLAGAPGPG) are compositionally biased toward low complexity. The disordered stretch occupies residues 249–282 (GSSLAGAPGPGDQRQGPGIAGKSGKVLREPQPGC). Asp-291, Asp-293, Asp-295, Gln-297, and Glu-302 together coordinate Ca(2+). EF-hand domains are found at residues 291 to 313 (DQDG…TVEN), 323 to 358 (WVKD…MNEY), and 359 to 394 (NALN…FTGS). A Phosphothreonine modification is found at Thr-310. The Ca(2+) site is built by Asp-336, Asn-338, and Asp-340. Thr-344 carries the post-translational modification Phosphothreonine. Residues Glu-347, Asp-372, Asn-374, Asn-376, His-378, and Glu-383 each contribute to the Ca(2+) site. The tract at residues 354–407 (PMNEYNALNEAKQMIAVADENQNHHLEPEEVLKYSEFFTGSKLVDYARSVHEEF) is necessary for intracellular retention in Golgi apparatus lumen.

It belongs to the CREC family.

The protein resides in the golgi apparatus lumen. May regulate calcium-dependent activities in the endoplasmic reticulum lumen or post-ER compartment. The polypeptide is 45 kDa calcium-binding protein (SDF4) (Macaca fascicularis (Crab-eating macaque)).